Reading from the N-terminus, the 65-residue chain is Large ribosomal subunit protein uL29 (65 aa).

Belongs to the universal ribosomal protein uL29 family.

The protein is Large ribosomal subunit protein uL29 of Dehalococcoides mccartyi (strain ATCC BAA-2100 / JCM 16839 / KCTC 5957 / BAV1).